The chain runs to 281 residues: Sorbose reductase SOU1 (281 aa).

Residues I47, K74, and N119 each contribute to the NADP(+) site. Active-site proton donor residues include S173 and Y188. NADP(+)-binding residues include Y188, K192, I221, and T223. K192 functions as the Lowers pKa of active site Tyr in the catalytic mechanism.

Belongs to the short-chain dehydrogenases/reductases (SDR) family. Homotetramer.

The catalysed reaction is D-sorbitol + NADP(+) = keto-L-sorbose + NADPH + H(+). The protein operates within carbohydrate degradation; L-sorbose degradation. Its function is as follows. Catalyzes the NADP dependent reduction of L-sorbose to D-glucitol. Can also convert fructose to mannitol, but less efficiently. The chain is Sorbose reductase SOU1 (SOU1) from Candida albicans (strain SC5314 / ATCC MYA-2876) (Yeast).